Here is a 369-residue protein sequence, read N- to C-terminus: MEMTLYSSSSFSLPSAPSNPSLSLFTSSFRFSSFKTSPFSKCRIRASLAVEQQTQQNKTALIRIGTRGSPLALAQAHETRDKLMASHTELAEEGAIQIVIIKTTGDKILSQPLADIGGKGLFTKEIDEALINGDIDIAVHSMKDVPTYLPEETILPCNLPREDVRDAFISLSAASLADLPAGSVIGTASLRRKSQILHRYPSLTVQDNFRGNVQTRLRKLSEGVVKATLLALAGLKRLNMTENVTSTLSIDDMLPAVAQGAIGIACRSNDDKMAEYLASLNHEETRLAISCERAFLTTLDGSCRTPIAGYASRDKDGNCLFRGLVASPDGTRVLETSRIGSYTYEDMMKIGKDAGEELLSRAGPGFFNS.

Residues 1–46 (MEMTLYSSSSFSLPSAPSNPSLSLFTSSFRFSSFKTSPFSKCRIRA) constitute a chloroplast transit peptide. C303 carries the S-(dipyrrolylmethanemethyl)cysteine modification.

This sequence belongs to the HMBS family. The cofactor is dipyrromethane.

Its subcellular location is the plastid. The protein resides in the chloroplast. The catalysed reaction is 4 porphobilinogen + H2O = hydroxymethylbilane + 4 NH4(+). It functions in the pathway porphyrin-containing compound metabolism; protoporphyrin-IX biosynthesis; coproporphyrinogen-III from 5-aminolevulinate: step 2/4. The protein operates within porphyrin-containing compound metabolism; chlorophyll biosynthesis. Functionally, tetrapolymerization of the monopyrrole PBG into the hydroxymethylbilane pre-uroporphyrinogen in several discrete steps. This Pisum sativum (Garden pea) protein is Porphobilinogen deaminase, chloroplastic (HEMC).